The chain runs to 385 residues: Initiation-specific alpha-1,6-mannosyltransferase (385 aa).

The Cytoplasmic segment spans residues 1-15 (MLQLREPQMVHKHLK). The chain crosses the membrane as a helical; Signal-anchor for type II membrane protein span at residues 16 to 36 (LAVLGIVVIFTTYFIISSLSS). The Lumenal portion of the chain corresponds to 37–385 (PTSTHKTEYN…KDDGMPEMEQ (349 aa)). The DXD motif signature appears at 189–191 (DID).

Belongs to the glycosyltransferase 32 family. Mn(2+) serves as cofactor.

The protein localises to the endoplasmic reticulum membrane. It is found in the golgi apparatus membrane. The catalysed reaction is Transfers an alpha-D-mannosyl residue from GDP-mannose into lipid-linked oligosaccharide, forming an alpha-(1-&gt;6)-D-mannosyl-D-mannose linkage.. In terms of biological role, mannosyltransferase involved in outer chain elongation of asparagine-linked oligosaccharides of the type Man(9)GlcNAc(2). Adds the first alpha-1,6-mannose to the Man(8)GlcNAc(2) and Man(9)GlcNAc(2), but not Man(5)GlcNAc(2), endoplasmic reticulum intermediates. Represents the first enzymatic event required for synthesis of outer chain mannose linkages on yeast secretory proteins. N-glycan outer chain epitopes play a crucial role in the host-fungal interaction, virulence, and host immune response such as interleukin synthesis or phagocytosis by neutrophils. This is Initiation-specific alpha-1,6-mannosyltransferase from Candida albicans (strain SC5314 / ATCC MYA-2876) (Yeast).